The following is a 357-amino-acid chain: MSDEKTEQPTDKKLEDAHRDGETAKSADLTAAAVLLSGCLLLALTASVFGERWRALLDLALDVDSSRHPLMTLKQTISHFALQLVLMTLPVGFVFALVAWIATWAQTGVVLSFKPVELKMSAINPASGLKRIFSVRSMIDLVKMIIKGVAVAAAVWKLILILMPSIVGAAYQSVMDIAEIGMTLLVRLLAAGGGLFLILGAADFGIQRWLFIRDHRMSKDEVKREHKNSEGDPHIKGERKKLARELADEAKPKQSVAGAQAVVVNPTHYAVAIRYAPEEYGLPRIIAKGVDDEALALREEAAALGIPIVGNPPLARSLYRVDLYGPVPEPLFETVAEVLAWVGEMGASGTPGAEPQH.

A disordered region spans residues 1-21 (MSDEKTEQPTDKKLEDAHRDG). The next 5 membrane-spanning stretches (helical) occupy residues 29 to 49 (LTAA…ASVF), 84 to 104 (LVLM…IATW), 149 to 169 (VAVA…IVGA), 180 to 200 (IGMT…LILG), and 323 to 343 (LYGP…AWVG).

The protein belongs to the type III secretion exporter family.

It localises to the cell membrane. Functionally, involved in the secretion of PopA, a proteinaceous elicitor of the hypersensitivity response in plants. The sequence is that of Hypersensitivity response secretion protein HrcU (hrcU) from Ralstonia nicotianae (strain ATCC BAA-1114 / GMI1000) (Ralstonia solanacearum).